Here is a 780-residue protein sequence, read N- to C-terminus: ATP-dependent 6-phosphofructokinase, liver type (780 aa).

Residue Ala2 is modified to N-acetylalanine. The segment at 2-390 is N-terminal catalytic PFK domain 1; it reads AAVDLEKLRA…NWNIYKLLAH (389 aa). Residues Gly25, 88 to 89, and 118 to 121 contribute to the ATP site; these read RC and GDGS. Residue Asp119 participates in Mg(2+) binding. Substrate contacts are provided by residues 164–166, Arg201, 208–210, Glu264, Arg292, and 298–301; these read SID, MGR, and HVQR. The active-site Proton acceptor is Asp166. A Phosphoserine modification is found at Ser377. Residues 391–400 form an interdomain linker region; it reads QKPPKEKSNF. The tract at residues 401-780 is C-terminal regulatory PFK domain 2; the sequence is SLAILNVGAP…RRTLSMDKGF (380 aa). Residues Arg470, 527–531, Arg565, 572–574, and Glu628 contribute to the beta-D-fructose 2,6-bisphosphate site; these read TISNN and MGG. Ser529 is a glycosylation site (O-linked (GlcNAc) serine). At Tyr640 the chain carries Phosphotyrosine. Beta-D-fructose 2,6-bisphosphate is bound by residues Arg654, 660–663, and Arg734; that span reads HLQQ. At Ser775 the chain carries Phosphoserine.

It belongs to the phosphofructokinase type A (PFKA) family. ATP-dependent PFK group I subfamily. Eukaryotic two domain clade 'E' sub-subfamily. Homo- and heterotetramers. Phosphofructokinase (PFK) enzyme functions as a tetramer composed of different combinations of 3 types of subunits, called PFKM (where M stands for Muscle), PFKL (Liver) and PFKP (Platelet). The composition of the PFK tetramer differs according to the tissue type it is present in. In muscles, it is composed of 4 PFKM subunits (also called M4). In the liver, the predominant form is a tetramer of PFKL subunits (L4). In erythrocytes, both PFKM and PFKL subunits randomly tetramerize to form M4, L4 and other combinations (ML3, M2L2, M3L). The kinetic and regulatory properties of the tetrameric enzyme are dependent on the subunit composition, hence can vary across tissues. Mg(2+) is required as a cofactor. GlcNAcylation at Ser-529 by OGT decreases enzyme activity, leading to redirect glucose flux through the oxidative pentose phosphate pathway. Glycosylation is stimulated by both hypoxia and glucose deprivation.

It is found in the cytoplasm. The catalysed reaction is beta-D-fructose 6-phosphate + ATP = beta-D-fructose 1,6-bisphosphate + ADP + H(+). It participates in carbohydrate degradation; glycolysis; D-glyceraldehyde 3-phosphate and glycerone phosphate from D-glucose: step 3/4. With respect to regulation, allosterically activated by ADP, AMP, or fructose 2,6-bisphosphate, and allosterically inhibited by ATP or citrate. GlcNAcylation by OGT overcomes allosteric regulation. In terms of biological role, catalyzes the phosphorylation of D-fructose 6-phosphate to fructose 1,6-bisphosphate by ATP, the first committing step of glycolysis. Negatively regulates the phagocyte oxidative burst in response to bacterial infection by controlling cellular NADPH biosynthesis and NADPH oxidase-derived reactive oxygen species. Upon macrophage activation, drives the metabolic switch toward glycolysis, thus preventing glucose turnover that produces NADPH via pentose phosphate pathway. The protein is ATP-dependent 6-phosphofructokinase, liver type of Homo sapiens (Human).